Reading from the N-terminus, the 685-residue chain is Sodium/glucose cotransporter 4 (685 aa).

Residues 1 to 20 form a disordered region; sequence MNTELVAMEPGVSRNGVRTE. Residues 1-32 are Extracellular-facing; it reads MNTELVAMEPGVSRNGVRTETTTNPSLGLHTY. The chain crosses the membrane as a helical span at residues 33–53; that stretch reads DIVVVVIYFVFVLAVGIWSSI. Residues 54-71 are Cytoplasmic-facing; the sequence is RASRGTVGGYFLAGRSMT. A helical transmembrane segment spans residues 72-94; the sequence is WWPIGASLMSSNVGSGLFIGLAG. Over 95–110 the chain is Extracellular; sequence TGAAGGLAVGGFEWNA. Residues 111–131 form a helical membrane-spanning segment; the sequence is TFLLLALGWIFVPVYIAAGVV. Topologically, residues 132-153 are cytoplasmic; it reads TMPQYLKKRFGGQRIQVYMSVL. Residues 154-174 traverse the membrane as a helical segment; the sequence is SLILYIFTKISTDIFSGALFI. Residues 175-186 lie on the Extracellular side of the membrane; the sequence is QMALGWNLYLST. A helical transmembrane segment spans residues 187–207; that stretch reads VILLVVTAVYTIAGGLTAVIY. The Cytoplasmic portion of the chain corresponds to 208–213; sequence TDALQT. A helical membrane pass occupies residues 214 to 234; the sequence is VIMVGGALVLMFLGFQEVGWY. At 235 to 271 the chain is on the extracellular side; sequence PGLQQLYRQAIPNTTVPNTTCHLPRPDAFHMLRDPVN. Asn-247 carries N-linked (GlcNAc...) asparagine glycosylation. Residues 272-292 form a helical membrane-spanning segment; sequence GDIPWPGLIFGLTVLATWCWC. Over 293-313 the chain is Cytoplasmic; that stretch reads TDQVIVQRSLAAKNLSHAKGG. Residues 314-334 form a helical membrane-spanning segment; that stretch reads SVLGGYLKILPMFFIVMPGMI. Residues 335 to 379 are Extracellular-facing; it reads SRALYPDEVACVDPDICQRVCGARVGCSNIAYPKLVMALMPVGLR. The helical transmembrane segment at 380-402 threads the bilayer; that stretch reads GLMIAVIMAALMSSLTSIFNSSS. The Cytoplasmic segment spans residues 403 to 423; the sequence is TLFAIDVWQRFRRQASEQELM. The helical transmembrane segment at 424 to 444 threads the bilayer; sequence VVGRLFVVFLVVISILWIPII. Topologically, residues 445-455 are extracellular; that stretch reads QSSNSGQLFDY. The helical transmembrane segment at 456–476 threads the bilayer; that stretch reads IQSITSYLAPPITALFLLAIF. Over 477–483 the chain is Cytoplasmic; the sequence is CKRVNEP. The helical transmembrane segment at 484 to 504 threads the bilayer; sequence GAFWGLMFGLVVGILRMILEF. Topologically, residues 505–526 are extracellular; that stretch reads SYSAPACGEMDRRPAVLKDFHY. Residues 527 to 547 traverse the membrane as a helical segment; it reads LYFALLLCGLTAIIIVVISFF. The Cytoplasmic segment spans residues 548–664; the sequence is TEPIPDDKLA…SIEEEPLWRR (117 aa). Residues 577–616 form a disordered region; sequence VSVNNTEDDNSPGLAGRPVVEGPAGDEEEANTTQGPEQPG. A helical transmembrane segment spans residues 665 to 685; that stretch reads VCNINAIILLAINIFLWGYFA.

The protein belongs to the sodium:solute symporter (SSF) (TC 2.A.21) family.

It localises to the cell membrane. It catalyses the reaction D-mannose(out) + n Na(+)(out) = D-mannose(in) + n Na(+)(in). In terms of biological role, electrogenic Na(+)-coupled sugar symporter that may play a primary role in D-mannose and possibly D-fructose and D-glucose transport at the plasma membrane. Transporter activity is driven by a transmembrane Na(+) electrochemical gradient set by the Na(+)/K(+) pump. Exclusively recognizes sugar substrates having a pyranose ring with an axial hydroxyl group on carbon 2. This chain is Sodium/glucose cotransporter 4 (Slc5a9), found in Mus musculus (Mouse).